The chain runs to 201 residues: Recombination protein RecR (201 aa).

Residues Cys-60–Cys-75 form a C4-type zinc finger. The region spanning Ser-83–Pro-178 is the Toprim domain.

This sequence belongs to the RecR family.

Functionally, may play a role in DNA repair. It seems to be involved in an RecBC-independent recombinational process of DNA repair. It may act with RecF and RecO. The polypeptide is Recombination protein RecR (Nitrobacter winogradskyi (strain ATCC 25391 / DSM 10237 / CIP 104748 / NCIMB 11846 / Nb-255)).